The sequence spans 429 residues: ATP-dependent RNA helicase RhlB (429 aa).

The Q motif motif lies at E9–A37. The Helicase ATP-binding domain maps to L40–V219. Residue A53–T60 coordinates ATP. The DEAD box signature appears at D165–D168. In terms of domain architecture, Helicase C-terminal spans K243–L390. The disordered stretch occupies residues A395 to S429.

This sequence belongs to the DEAD box helicase family. RhlB subfamily. Component of the RNA degradosome, which is a multiprotein complex involved in RNA processing and mRNA degradation.

It localises to the cytoplasm. It catalyses the reaction ATP + H2O = ADP + phosphate + H(+). In terms of biological role, DEAD-box RNA helicase involved in RNA degradation. Has RNA-dependent ATPase activity and unwinds double-stranded RNA. The chain is ATP-dependent RNA helicase RhlB from Aeromonas salmonicida (strain A449).